Reading from the N-terminus, the 314-residue chain is ATP synthase gamma chain (314 aa).

Belongs to the ATPase gamma chain family. F-type ATPases have 2 components, CF(1) - the catalytic core - and CF(0) - the membrane proton channel. CF(1) has five subunits: alpha(3), beta(3), gamma(1), delta(1), epsilon(1). CF(0) has three main subunits: a, b and c.

It localises to the cell membrane. Produces ATP from ADP in the presence of a proton gradient across the membrane. The gamma chain is believed to be important in regulating ATPase activity and the flow of protons through the CF(0) complex. The polypeptide is ATP synthase gamma chain (Cutibacterium acnes (strain DSM 16379 / KPA171202) (Propionibacterium acnes)).